The primary structure comprises 463 residues: Chromosomal replication initiator protein DnaA (463 aa).

The tract at residues 1-83 (MSTNQIILTD…LQLFQHYNNT (83 aa)) is domain I, interacts with DnaA modulators. A domain II region spans residues 83–124 (TIKSVEIITKELPGTSKTVIELPTKTFADIGSSELNAENIFS). A domain III, AAA+ region region spans residues 125–343 (TLDVRFTFDN…GALNKVIAHS (219 aa)). ATP-binding residues include Gly-171, Gly-173, Lys-174, and Thr-175. Residues 344 to 463 (NFTLKEITLE…INLLMKILQN (120 aa)) form a domain IV, binds dsDNA region.

Belongs to the DnaA family. As to quaternary structure, oligomerizes as a right-handed, spiral filament on DNA at oriC.

It is found in the cytoplasm. Its function is as follows. Plays an essential role in the initiation and regulation of chromosomal replication. ATP-DnaA binds to the origin of replication (oriC) to initiate formation of the DNA replication initiation complex once per cell cycle. Binds the DnaA box (a 9 base pair repeat at the origin) and separates the double-stranded (ds)DNA. Forms a right-handed helical filament on oriC DNA; dsDNA binds to the exterior of the filament while single-stranded (ss)DNA is stabiized in the filament's interior. The ATP-DnaA-oriC complex binds and stabilizes one strand of the AT-rich DNA unwinding element (DUE), permitting loading of DNA polymerase. After initiation quickly degrades to an ADP-DnaA complex that is not apt for DNA replication. Binds acidic phospholipids. This is Chromosomal replication initiator protein DnaA from Rickettsia canadensis (strain McKiel).